The chain runs to 257 residues: UPF0246 protein YaaA (257 aa).

Belongs to the UPF0246 family.

The polypeptide is UPF0246 protein YaaA (Salmonella arizonae (strain ATCC BAA-731 / CDC346-86 / RSK2980)).